A 227-amino-acid polypeptide reads, in one-letter code: Cytochrome c oxidase subunit 2 (227 aa).

The Mitochondrial intermembrane portion of the chain corresponds to 1-14; that stretch reads MAYPFQLGFQDATS. The helical transmembrane segment at 15 to 45 threads the bilayer; the sequence is PIMEELLHFHDHTLMIVFLISSLVLYVISAM. Residues 46–59 lie on the Mitochondrial matrix side of the membrane; sequence LTTNLTHTSTMDAQ. Residues 60–87 form a helical membrane-spanning segment; it reads EVETIWTILPAIILITIALPSLRILYMM. Topologically, residues 88-227 are mitochondrial intermembrane; that stretch reads DEINNPAMTI…YFEKWSVSML (140 aa). Positions 161, 196, 198, 200, 204, and 207 each coordinate Cu cation. Glu-198 contributes to the Mg(2+) binding site. At Tyr-218 the chain carries Phosphotyrosine.

Belongs to the cytochrome c oxidase subunit 2 family. As to quaternary structure, component of the cytochrome c oxidase (complex IV, CIV), a multisubunit enzyme composed of 14 subunits. The complex is composed of a catalytic core of 3 subunits MT-CO1, MT-CO2 and MT-CO3, encoded in the mitochondrial DNA, and 11 supernumerary subunits COX4I, COX5A, COX5B, COX6A, COX6B, COX6C, COX7A, COX7B, COX7C, COX8 and NDUFA4, which are encoded in the nuclear genome. The complex exists as a monomer or a dimer and forms supercomplexes (SCs) in the inner mitochondrial membrane with NADH-ubiquinone oxidoreductase (complex I, CI) and ubiquinol-cytochrome c oxidoreductase (cytochrome b-c1 complex, complex III, CIII), resulting in different assemblies (supercomplex SCI(1)III(2)IV(1) and megacomplex MCI(2)III(2)IV(2)). Found in a complex with TMEM177, COA6, COX18, COX20, SCO1 and SCO2. Interacts with TMEM177 in a COX20-dependent manner. Interacts with COX20. Interacts with COX16. Cu cation is required as a cofactor.

Its subcellular location is the mitochondrion inner membrane. It carries out the reaction 4 Fe(II)-[cytochrome c] + O2 + 8 H(+)(in) = 4 Fe(III)-[cytochrome c] + 2 H2O + 4 H(+)(out). Functionally, component of the cytochrome c oxidase, the last enzyme in the mitochondrial electron transport chain which drives oxidative phosphorylation. The respiratory chain contains 3 multisubunit complexes succinate dehydrogenase (complex II, CII), ubiquinol-cytochrome c oxidoreductase (cytochrome b-c1 complex, complex III, CIII) and cytochrome c oxidase (complex IV, CIV), that cooperate to transfer electrons derived from NADH and succinate to molecular oxygen, creating an electrochemical gradient over the inner membrane that drives transmembrane transport and the ATP synthase. Cytochrome c oxidase is the component of the respiratory chain that catalyzes the reduction of oxygen to water. Electrons originating from reduced cytochrome c in the intermembrane space (IMS) are transferred via the dinuclear copper A center (CU(A)) of subunit 2 and heme A of subunit 1 to the active site in subunit 1, a binuclear center (BNC) formed by heme A3 and copper B (CU(B)). The BNC reduces molecular oxygen to 2 water molecules using 4 electrons from cytochrome c in the IMS and 4 protons from the mitochondrial matrix. This is Cytochrome c oxidase subunit 2 (MT-CO2) from Macrotus californicus (Californian leaf-nosed bat).